A 215-amino-acid chain; its full sequence is Small ribosomal subunit protein uS7 (215 aa).

Belongs to the universal ribosomal protein uS7 family. As to quaternary structure, part of the 30S ribosomal subunit.

Functionally, one of the primary rRNA binding proteins, it binds directly to 16S rRNA where it nucleates assembly of the head domain of the 30S subunit. Is located at the subunit interface close to the decoding center. The sequence is that of Small ribosomal subunit protein uS7 from Thermococcus onnurineus (strain NA1).